A 717-amino-acid polypeptide reads, in one-letter code: Cleavage stimulation factor subunit 3 (717 aa).

N-acetylserine is present on S2. HAT repeat units follow at residues 45-77 (QPIDKARKTYERLVAQFPSSGRFWKLYIEAEIK), 79-110 (KNYDKVEKLFQRCLMKVLHIDLWKCYLSYVRE), 117-152 (SYKEKMAQAYDFALDKIGMEIMSYQIWVDYINFLKG), 163-196 (QRITAVRRVYQRGCVNPMINIEQLWRDYNKYEEG), 221-261 (KEYE…WEKS), 271-303 (LITKRVMFAYEQCLLVLGHHPDIWYEAAQYLEQ), 319-352 (LFSDEAANIYERAISTLLKKNMLLYFAYADYEES), 354-387 (MKYEKVHSIYNRLLAIEDIDPTLVYIQYMKFARR), and 458-494 (NEDNNTRVLFERVLTSGSLPPEKSGEIWARFLAFESN). Residues 684–705 (VKRPNEDSDEDEEKGAVVPPVH) are disordered. S691 is subject to Phosphoserine.

Homodimer. The CSTF complex is composed of CSTF1 (50 kDa subunit), CSTF2 (64 kDa subunit) and CSTF3 (77 kDa subunit). CSTF3 directly interacts with CSTF1 and CSTF2. Interacts with FIP1L1.

The protein resides in the nucleus. One of the multiple factors required for polyadenylation and 3'-end cleavage of mammalian pre-mRNAs. The sequence is that of Cleavage stimulation factor subunit 3 (CSTF3) from Pongo abelii (Sumatran orangutan).